The primary structure comprises 63 residues: Large ribosomal subunit protein bL28 (63 aa).

This sequence belongs to the bacterial ribosomal protein bL28 family.

The protein is Large ribosomal subunit protein bL28 of Treponema denticola (strain ATCC 35405 / DSM 14222 / CIP 103919 / JCM 8153 / KCTC 15104).